Reading from the N-terminus, the 333-residue chain is Ketol-acid reductoisomerase (NADP(+)) (333 aa).

In terms of domain architecture, KARI N-terminal Rossmann spans 2 to 182 (ANIYYDDSCD…GGGRAGILET (181 aa)). NADP(+)-binding positions include 25 to 28 (YGSQ), R48, S51, S53, and 83 to 86 (DTIQ). H108 is a catalytic residue. Residue G134 coordinates NADP(+). The KARI C-terminal knotted domain maps to 183-331 (SFREETETDL…TKLRSMMKWL (149 aa)). Mg(2+)-binding residues include D191, E195, E227, and E231. Residue S252 coordinates substrate.

The protein belongs to the ketol-acid reductoisomerase family. Mg(2+) serves as cofactor.

It catalyses the reaction (2R)-2,3-dihydroxy-3-methylbutanoate + NADP(+) = (2S)-2-acetolactate + NADPH + H(+). The catalysed reaction is (2R,3R)-2,3-dihydroxy-3-methylpentanoate + NADP(+) = (S)-2-ethyl-2-hydroxy-3-oxobutanoate + NADPH + H(+). The protein operates within amino-acid biosynthesis; L-isoleucine biosynthesis; L-isoleucine from 2-oxobutanoate: step 2/4. Its pathway is amino-acid biosynthesis; L-valine biosynthesis; L-valine from pyruvate: step 2/4. Involved in the biosynthesis of branched-chain amino acids (BCAA). Catalyzes an alkyl-migration followed by a ketol-acid reduction of (S)-2-acetolactate (S2AL) to yield (R)-2,3-dihydroxy-isovalerate. In the isomerase reaction, S2AL is rearranged via a Mg-dependent methyl migration to produce 3-hydroxy-3-methyl-2-ketobutyrate (HMKB). In the reductase reaction, this 2-ketoacid undergoes a metal-dependent reduction by NADPH to yield (R)-2,3-dihydroxy-isovalerate. This Leptospira biflexa serovar Patoc (strain Patoc 1 / Ames) protein is Ketol-acid reductoisomerase (NADP(+)).